The following is a 165-amino-acid chain: Putative 4-hydroxy-4-methyl-2-oxoglutarate aldolase (165 aa).

Residues 80 to 83 and Arg102 each bind substrate; that span reads GGNL. A divalent metal cation is bound at residue Asp103.

It belongs to the class II aldolase/RraA-like family. Homotrimer. The cofactor is a divalent metal cation.

It carries out the reaction 4-hydroxy-4-methyl-2-oxoglutarate = 2 pyruvate. It catalyses the reaction oxaloacetate + H(+) = pyruvate + CO2. Its function is as follows. Catalyzes the aldol cleavage of 4-hydroxy-4-methyl-2-oxoglutarate (HMG) into 2 molecules of pyruvate. Also contains a secondary oxaloacetate (OAA) decarboxylase activity due to the common pyruvate enolate transition state formed following C-C bond cleavage in the retro-aldol and decarboxylation reactions. In Cupriavidus taiwanensis (strain DSM 17343 / BCRC 17206 / CCUG 44338 / CIP 107171 / LMG 19424 / R1) (Ralstonia taiwanensis (strain LMG 19424)), this protein is Putative 4-hydroxy-4-methyl-2-oxoglutarate aldolase.